We begin with the raw amino-acid sequence, 116 residues long: Large ribosomal subunit protein uL24 (116 aa).

Belongs to the universal ribosomal protein uL24 family. Part of the 50S ribosomal subunit.

Its function is as follows. One of two assembly initiator proteins, it binds directly to the 5'-end of the 23S rRNA, where it nucleates assembly of the 50S subunit. Functionally, located at the polypeptide exit tunnel on the outside of the subunit. The protein is Large ribosomal subunit protein uL24 of Methanosarcina barkeri (strain Fusaro / DSM 804).